The following is a 1939-amino-acid chain: Myosin-2 (1939 aa).

The Myosin N-terminal SH3-like domain maps to 33-82 (DAKTSVFVAEPKESFVKGTIQSREGGKVTVKTEAGATLTVKEDQVFPMNP). Residues threonine 64 and threonine 69 each carry the phosphothreonine modification. A Myosin motor domain is found at 86–782 (DKIEDMAMMT…LLGLLEEMRD (697 aa)). At lysine 130 the chain carries N6,N6,N6-trimethyllysine. 179–186 (GESGAGKT) provides a ligand contact to ATP. Tyrosine 389 carries the post-translational modification Phosphotyrosine. Serine 392 bears the Phosphoserine mark. Threonine 419 bears the Phosphothreonine mark. A Phosphoserine modification is found at serine 625. An actin-binding region spans residues 659-681 (LNKLMTNLRSTHPHFVRCIIPNE). Residue histidine 757 is modified to Pros-methylhistidine. An actin-binding region spans residues 761–775 (KFGHTKVFFKAGLLG). Residues 785–814 (LAQLITRTQARCRGFLARVEYQKMVERRES) form the IQ domain. A coiled-coil region spans residues 843–1939 (LLKSAESEKE…EVHTKVISEE (1097 aa)). A phosphoserine mark is found at serine 1092 and serine 1096. Disordered stretches follow at residues 1126-1147 (IEAE…SREL) and 1153-1172 (RLEE…KKRE). A compositionally biased stretch (basic and acidic residues) spans 1128–1147 (AERASRAKAEKQRSDLSREL). Serine 1162 and serine 1237 each carry phosphoserine. Threonine 1241 carries the post-translational modification Phosphothreonine. Serine 1243 carries the post-translational modification Phosphoserine. Threonine 1255 is subject to Phosphothreonine. A Phosphoserine modification is found at serine 1261. Threonine 1286 carries the post-translational modification Phosphothreonine. Residues serine 1288, serine 1292, serine 1303, and serine 1306 each carry the phosphoserine modification. Tyrosine 1464 bears the Phosphotyrosine mark. Position 1467 is a phosphothreonine (threonine 1467). Residue serine 1474 is modified to Phosphoserine. Tyrosine 1492 bears the Phosphotyrosine mark. Serine 1495 carries the phosphoserine modification. Residue threonine 1501 is modified to Phosphothreonine. At serine 1514 the chain carries Phosphoserine. The residue at position 1517 (threonine 1517) is a Phosphothreonine. 7 positions are modified to phosphoserine: serine 1542, serine 1554, serine 1574, serine 1600, serine 1603, serine 1714, and serine 1726. 2 positions are modified to phosphothreonine: threonine 1730 and threonine 1736. Serine 1739 carries the phosphoserine modification. Residues 1885 to 1915 (QAEEAEEQSNTNLSKFRKLQHELEEAEERAD) form a disordered region.

The protein belongs to the TRAFAC class myosin-kinesin ATPase superfamily. Myosin family. In terms of assembly, muscle myosin is a hexameric protein that consists of 2 heavy chain subunits (MHC), 2 alkali light chain subunits (MLC) and 2 regulatory light chain subunits (MLC-2). Interacts with GCSAM.

The protein resides in the cytoplasm. It localises to the myofibril. Its function is as follows. Myosins are actin-based motor molecules with ATPase activity essential for muscle contraction. This is Myosin-2 (MYH2) from Sus scrofa (Pig).